Here is a 612-residue protein sequence, read N- to C-terminus: Methionine--tRNA ligase (612 aa).

A 'HIGH' region motif is present at residues 12–22; sequence PYANGPRHIGH. Residues Cys-144, Cys-147, Cys-157, and Cys-160 each coordinate Zn(2+). The 'KMSKS' region signature appears at 348-352; sequence KFSSS. Residue Ser-351 coordinates ATP.

The protein belongs to the class-I aminoacyl-tRNA synthetase family. MetG type 1 subfamily. In terms of assembly, monomer. Requires Zn(2+) as cofactor.

It is found in the cytoplasm. The catalysed reaction is tRNA(Met) + L-methionine + ATP = L-methionyl-tRNA(Met) + AMP + diphosphate. Its function is as follows. Is required not only for elongation of protein synthesis but also for the initiation of all mRNA translation through initiator tRNA(fMet) aminoacylation. This chain is Methionine--tRNA ligase, found in Corynebacterium kroppenstedtii (strain DSM 44385 / JCM 11950 / CIP 105744 / CCUG 35717).